We begin with the raw amino-acid sequence, 413 residues long: Probable tRNA pseudouridine synthase D (413 aa).

Residue D97 is the Nucleophile of the active site. The TRUD domain occupies 167-370; sequence AVPNYYGYQR…YGSYRRARLE (204 aa).

This sequence belongs to the pseudouridine synthase TruD family.

It catalyses the reaction uridine(13) in tRNA = pseudouridine(13) in tRNA. Functionally, could be responsible for synthesis of pseudouridine from uracil-13 in transfer RNAs. The chain is Probable tRNA pseudouridine synthase D from Pyrobaculum arsenaticum (strain DSM 13514 / JCM 11321 / PZ6).